A 358-amino-acid chain; its full sequence is uncharacterized protein (358 aa).

Positions 1–47 are disordered; that stretch reads MGNVAGETRANVIPLHTNRSRVAARRRAGQRAESRQHPSLLSDPNDR. A compositionally biased stretch (basic residues) spans 18 to 29; it reads NRSRVAARRRAG.

It to M.leprae ML2427.

This is an uncharacterized protein from Mycobacterium tuberculosis (strain CDC 1551 / Oshkosh).